Reading from the N-terminus, the 697-residue chain is Polyribonucleotide nucleotidyltransferase (697 aa).

Mg(2+)-binding residues include Asp484 and Asp490. The region spanning 551–610 (PRITTIWVKTDKIRDVIGSGGKNIRGITEATGVSIDIEDSGRINIASTSKEACDKAIKMI) is the KH domain. The 69-residue stretch at 620–688 (GKLYMGTVKK…KQGKIKLSRK (69 aa)) folds into the S1 motif domain.

Belongs to the polyribonucleotide nucleotidyltransferase family. Requires Mg(2+) as cofactor.

Its subcellular location is the cytoplasm. The catalysed reaction is RNA(n+1) + phosphate = RNA(n) + a ribonucleoside 5'-diphosphate. Involved in mRNA degradation. Catalyzes the phosphorolysis of single-stranded polyribonucleotides processively in the 3'- to 5'-direction. This Geobacter sulfurreducens (strain ATCC 51573 / DSM 12127 / PCA) protein is Polyribonucleotide nucleotidyltransferase.